A 384-amino-acid polypeptide reads, in one-letter code: WD repeat-containing protein 74 (384 aa).

WD repeat units follow at residues 40 to 80, 83 to 122, 128 to 168, 179 to 220, 224 to 266, and 267 to 306; these read RREE…FLSQ, CPGGEGTFRGLAQADGTLITCVDSGILRVWCENDKEASSD, KVGP…EPVF, DLRV…RRPV, TYGE…GCLK, and GLAGSVRGLQCHPSKPLLASCGLDRVLRIHRIRNPRGLEH. The residue at position 214 (Ser-214) is a Phosphoserine. Lys-311 carries the post-translational modification N6-methyllysine. Residues 320 to 384 form a required for nucleolar and nuclear location region; sequence SGRDNWEDEP…KKKRPGSTSP (65 aa). Residues 323-384 are disordered; sequence DNWEDEPQEP…KKKRPGSTSP (62 aa). The span at 371-384 shows a compositional bias: basic residues; the sequence is QRRKKKKRPGSTSP.

Isoform 1 interacts (through WDR repeats) with NVL; the interaction is independent of RNA or pre-60S ribosome particles. Isoform 2 does not interact with NVL. Interacts with MTREX; the interaction dissociation in a late stage of rRNA synthesis is required for appropriate maturation of pre-60S particles and depends on the ATPase activity of NVL.

The protein localises to the nucleus. It is found in the nucleolus. In terms of biological role, regulatory protein of the MTREX-exosome complex involved in the synthesis of the 60S ribosomal subunit. Participates in an early cleavage of the pre-rRNA processing pathway in cooperation with NVL. Required for blastocyst formation, is necessary for RNA transcription, processing and/or stability during preimplantation development. The chain is WD repeat-containing protein 74 (Wdr74) from Mus musculus (Mouse).